The sequence spans 350 residues: Hydroxymethylglutaryl-CoA synthase (350 aa).

The active-site Proton donor/acceptor is E83. C115 functions as the Acyl-thioester intermediate in the catalytic mechanism. (3S)-3-hydroxy-3-methylglutaryl-CoA contacts are provided by C115 and T156. R204 is a binding site for CoA. (3S)-3-hydroxy-3-methylglutaryl-CoA is bound by residues T206 and H239. H239 acts as the Proton donor/acceptor in catalysis. CoA is bound at residue K244. The (3S)-3-hydroxy-3-methylglutaryl-CoA site is built by N271 and S301.

The protein belongs to the thiolase-like superfamily. Archaeal HMG-CoA synthase family. Interacts with acetoacetyl-CoA thiolase that catalyzes the precedent step in the pathway and with a DUF35 protein. The acetoacetyl-CoA thiolase/HMG-CoA synthase complex channels the intermediate via a fused CoA-binding site, which allows for efficient coupling of the endergonic thiolase reaction with the exergonic HMGCS reaction.

It catalyses the reaction acetoacetyl-CoA + acetyl-CoA + H2O = (3S)-3-hydroxy-3-methylglutaryl-CoA + CoA + H(+). It functions in the pathway metabolic intermediate biosynthesis; (R)-mevalonate biosynthesis; (R)-mevalonate from acetyl-CoA: step 2/3. Its function is as follows. Catalyzes the condensation of acetyl-CoA with acetoacetyl-CoA to form 3-hydroxy-3-methylglutaryl-CoA (HMG-CoA). Functions in the mevalonate (MVA) pathway leading to isopentenyl diphosphate (IPP), a key precursor for the biosynthesis of isoprenoid compounds that are building blocks of archaeal membrane lipids. In Thermococcus onnurineus (strain NA1), this protein is Hydroxymethylglutaryl-CoA synthase.